A 91-amino-acid polypeptide reads, in one-letter code: Gem-associated protein 7 homolog (91 aa).

Positions 18–86 (LKFYQKMASA…VVGIEYNLVQ (69 aa)) constitute a Sm domain.

This sequence belongs to the gemin-7 family. Part of the core SMN complex at least composed of smn1, yip11/gem2, gem6, gem7 and gem8. Interacts with gem6; the interaction is direct. Interacts with gem8; the interaction is direct.

This chain is Gem-associated protein 7 homolog, found in Schizosaccharomyces pombe (strain 972 / ATCC 24843) (Fission yeast).